The chain runs to 136 residues: Large ribosomal subunit protein uL16 (136 aa).

Belongs to the universal ribosomal protein uL16 family. As to quaternary structure, part of the 50S ribosomal subunit.

In terms of biological role, binds 23S rRNA and is also seen to make contacts with the A and possibly P site tRNAs. This chain is Large ribosomal subunit protein uL16, found in Aggregatibacter actinomycetemcomitans (Actinobacillus actinomycetemcomitans).